Reading from the N-terminus, the 396-residue chain is Elongation factor Tu 1 (396 aa).

Residues 10 to 206 (KPHVNVGTIG…ALDTYIPTPE (197 aa)) form the tr-type G domain. The segment at 19-26 (GHVDHGKT) is G1. Residue 19–26 (GHVDHGKT) participates in GTP binding. Residue T26 participates in Mg(2+) binding. Residues 60–64 (GITIN) form a G2 region. The tract at residues 81-84 (DCPG) is G3. GTP contacts are provided by residues 81–85 (DCPGH) and 136–139 (NKCD). Residues 136–139 (NKCD) are G4. Positions 174–176 (SAK) are G5.

Belongs to the TRAFAC class translation factor GTPase superfamily. Classic translation factor GTPase family. EF-Tu/EF-1A subfamily. In terms of assembly, monomer.

The protein resides in the cytoplasm. The catalysed reaction is GTP + H2O = GDP + phosphate + H(+). GTP hydrolase that promotes the GTP-dependent binding of aminoacyl-tRNA to the A-site of ribosomes during protein biosynthesis. The polypeptide is Elongation factor Tu 1 (Acidovorax sp. (strain JS42)).